Consider the following 78-residue polypeptide: Putative snRNP Sm-like protein (78 aa).

The 73-residue stretch at 4 to 76 (RPLDVIHRSL…VLAISPVDVG (73 aa)) folds into the Sm domain.

Belongs to the snRNP Sm proteins family.

The chain is Putative snRNP Sm-like protein from Thermococcus onnurineus (strain NA1).